The primary structure comprises 254 residues: Probable triosephosphate isomerase 2 (254 aa).

9 to 11 lines the substrate pocket; sequence NMK. The Electrophile role is filled by H96. The active-site Proton acceptor is E168. Substrate-binding residues include G174 and S212.

It belongs to the triosephosphate isomerase family. As to quaternary structure, homodimer.

It localises to the cytoplasm. The enzyme catalyses D-glyceraldehyde 3-phosphate = dihydroxyacetone phosphate. It functions in the pathway carbohydrate biosynthesis; gluconeogenesis. Its pathway is carbohydrate degradation; glycolysis; D-glyceraldehyde 3-phosphate from glycerone phosphate: step 1/1. Functionally, involved in the gluconeogenesis. Catalyzes stereospecifically the conversion of dihydroxyacetone phosphate (DHAP) to D-glyceraldehyde-3-phosphate (G3P). The chain is Probable triosephosphate isomerase 2 from Listeria monocytogenes serotype 4b (strain F2365).